Here is a 615-residue protein sequence, read N- to C-terminus: Protein translocase subunit SecD (615 aa).

The next 6 membrane-spanning stretches (helical) occupy residues 10–30 (YVML…NLFG), 452–472 (QGLE…IIFY), 477–497 (LIAT…MSLL), 504–524 (MPGI…NVLI), 548–570 (GAFS…LYAV), and 585–605 (GVAT…NLLY).

Belongs to the SecD/SecF family. SecD subfamily. In terms of assembly, forms a complex with SecF. Part of the essential Sec protein translocation apparatus which comprises SecA, SecYEG and auxiliary proteins SecDF-YajC and YidC.

The protein localises to the cell inner membrane. Its function is as follows. Part of the Sec protein translocase complex. Interacts with the SecYEG preprotein conducting channel. SecDF uses the proton motive force (PMF) to complete protein translocation after the ATP-dependent function of SecA. The polypeptide is Protein translocase subunit SecD (Shigella flexneri).